A 293-amino-acid polypeptide reads, in one-letter code: Diaminopimelate epimerase (293 aa).

Residues asparagine 11 and asparagine 78 each coordinate substrate. Cysteine 87 (proton donor) is an active-site residue. Residues 88-89 (GN), asparagine 166, asparagine 202, and 220-221 (ER) contribute to the substrate site. Catalysis depends on cysteine 229, which acts as the Proton acceptor. 230–231 (GT) contacts substrate.

Belongs to the diaminopimelate epimerase family. As to quaternary structure, homodimer.

Its subcellular location is the cytoplasm. The catalysed reaction is (2S,6S)-2,6-diaminopimelate = meso-2,6-diaminopimelate. Its pathway is amino-acid biosynthesis; L-lysine biosynthesis via DAP pathway; DL-2,6-diaminopimelate from LL-2,6-diaminopimelate: step 1/1. Its function is as follows. Catalyzes the stereoinversion of LL-2,6-diaminopimelate (L,L-DAP) to meso-diaminopimelate (meso-DAP), a precursor of L-lysine and an essential component of the bacterial peptidoglycan. The sequence is that of Diaminopimelate epimerase from Mycobacterium sp. (strain JLS).